The following is a 94-amino-acid chain: Acylphosphatase (94 aa).

The Acylphosphatase-like domain maps to 8–94; the sequence is RFTARVVGRV…QGDLADFRRK (87 aa). Catalysis depends on residues Arg23 and Asn41.

This sequence belongs to the acylphosphatase family.

It carries out the reaction an acyl phosphate + H2O = a carboxylate + phosphate + H(+). This Frankia alni (strain DSM 45986 / CECT 9034 / ACN14a) protein is Acylphosphatase (acyP).